The primary structure comprises 155 residues: Small ribosomal subunit protein uS7 (155 aa).

This sequence belongs to the universal ribosomal protein uS7 family. In terms of assembly, part of the 30S ribosomal subunit. Contacts proteins S9 and S11.

Its function is as follows. One of the primary rRNA binding proteins, it binds directly to 16S rRNA where it nucleates assembly of the head domain of the 30S subunit. Is located at the subunit interface close to the decoding center, probably blocks exit of the E-site tRNA. The protein is Small ribosomal subunit protein uS7 of Chlorobium limicola (strain DSM 245 / NBRC 103803 / 6330).